Consider the following 215-residue polypeptide: Large ribosomal subunit protein uL3 (215 aa).

Glutamine 153 carries the post-translational modification N5-methylglutamine.

Belongs to the universal ribosomal protein uL3 family. Part of the 50S ribosomal subunit. Forms a cluster with proteins L14 and L19. Methylated by PrmB.

One of the primary rRNA binding proteins, it binds directly near the 3'-end of the 23S rRNA, where it nucleates assembly of the 50S subunit. This Nitrosococcus oceani (strain ATCC 19707 / BCRC 17464 / JCM 30415 / NCIMB 11848 / C-107) protein is Large ribosomal subunit protein uL3.